We begin with the raw amino-acid sequence, 551 residues long: MTDPIMSNETIIRRSANYRPPIWDFDFVQSLKSEFVGELNIKRIDKLKEDVKMMLNKTMAPSDQFELIDTLQRLGLAYHFGDEIKRIVKSIYNSHRNDNTWMKEDLHTIALQFRLLRQHGYNISQEIFDIFRDELGNFKECLHEDIEGMLSLYEASYLLEEGENILEVAREFAASCLKKYIQVNKDQLLSMIVSHSLEVPLHWRMPRLETRWFIDIYEKKQGMNPLLLELAKLDFNNVQATYHEDLKYVTSWWRNTGLGEKLSFARDRLMENFLWTVGVNFPPQFGYFRRISTKVNSLITVIDDIYDVYGTLDELQLFTNAVERWDVNAMDQLPEYMKLCFLALHNSINEMAYDALREQGFHIIPYLKKAWADLCKSYLVEAKWYYIGYTPTLQEYMDNAWISISAPVILVHAYFLEGSPITNEALKSLKEYPDIIQWSSMILRFADDLGTSSDELKRGDNPKSIQCYIYETGVSELKAREHIQYLIGETWKKINKEREYIDSPFSKIFIEVATNLARMAQCMYQHGDGHGIEDGETKDHVLSLLVKPIPM.

Mg(2+) contacts are provided by aspartate 303, aspartate 307, and glutamate 455. The DDXXD motif motif lies at 303 to 307 (DDIYD).

It belongs to the terpene synthase family. It depends on Mg(2+) as a cofactor.

Its function is as follows. Catalyzes the cyclization of farnesyl diphosphate to sesquiterpene olefins. The polypeptide is Terpene synthase 10 (TPS10) (Ricinus communis (Castor bean)).